A 488-amino-acid polypeptide reads, in one-letter code: Annexin A7 (488 aa).

A compositionally biased stretch (pro residues) spans 1–18 (MSYPGYPPTGYPPFPGYP). 2 disordered regions span residues 1 to 49 (MSYP…YPQV) and 71 to 143 (GYPG…PTYP). Residues 1 to 143 (MSYPGYPPTG…QYPGGQPTYP (143 aa)) form a repeat-rich region region. The segment at 5 to 20 (GYPPTGYPPFPGYPPA) is 3 X 5 AA tandem repeats of G-Y-P-P-X. Gly residues predominate over residues 89 to 102 (PGQGFGVPPGGAGF). Annexin repeat units follow at residues 185 to 256 (FDAI…ALFM), 257 to 328 (PPTY…SMCQ), 340 to 412 (QMAQ…TILQ), and 416 to 487 (NRPA…AIVG). At Lys233 the chain carries N6-acetyllysine.

This sequence belongs to the annexin family. As to quaternary structure, interacts with PDCD6. In terms of tissue distribution, isoform 1 is expressed in brain, heart and skeletal muscle. Isoform 2 is more abundant in liver, lung, kidney, spleen, fibroblasts and placenta.

In terms of biological role, calcium/phospholipid-binding protein which promotes membrane fusion and is involved in exocytosis. The polypeptide is Annexin A7 (ANXA7) (Homo sapiens (Human)).